An 85-amino-acid chain; its full sequence is Putative membrane protein insertion efficiency factor (85 aa).

It belongs to the UPF0161 family.

It is found in the cell inner membrane. Functionally, could be involved in insertion of integral membrane proteins into the membrane. In Fervidobacterium nodosum (strain ATCC 35602 / DSM 5306 / Rt17-B1), this protein is Putative membrane protein insertion efficiency factor.